The following is a 352-amino-acid chain: MSFIEKVRKLRGAAATMPRRLAIAAVGASLLSGVAVAAGGSPVAGAFSKPGLPVEYLEVPSPSMGRNIKVQFQGGGPHAVYLLDGLRAQDDYNGWDINTPAFEEFYQSGLSVIMPVGGQSSFYSNWYQPSSGNGQNYTYKWETFLTQEMPLWMQSNKQVSPAGNAAVGLSMSGGSALILAAYYPQQFPYAASLSGFLNPSEGWWPTLIGLAMNDSGGYNANSMWGPSTDPAWKRNDPMVQIPRLVANNTRIWVYCGNGTPSDLGGDNVPAKFLEGLTLRTNEQFQNNYAAAGGRNGVFNFPANGTHSWPYWNQQLMAMKPDMQQVLLSGNTTAAPAQPAQPAQPAQPAQPAT.

Positions 1 to 37 are cleaved as a signal peptide; it reads MSFIEKVRKLRGAAATMPRRLAIAAVGASLLSGVAVA. Position 86–87 (86–87) interacts with substrate; that stretch reads LR. The tract at residues 102-112 is fibronectin-binding; sequence FEEFYQSGLSV. Ser-170 and Asn-198 together coordinate substrate. The active-site Nucleophile is the Ser-170. Residue Glu-274 is part of the active site. Substrate-binding positions include 276–279 and 306–308; these read LTLR and HSW. The active site involves His-306. The segment at 332 to 352 is disordered; the sequence is TAAPAQPAQPAQPAQPAQPAT. Positions 333 to 352 are enriched in low complexity; that stretch reads AAPAQPAQPAQPAQPAQPAT.

This sequence belongs to the mycobacterial A85 antigen family. In terms of assembly, homodimer.

The protein resides in the secreted. It carries out the reaction an acyl-CoA + a 1,2-diacyl-sn-glycerol = a triacyl-sn-glycerol + CoA. It catalyses the reaction 2 alpha,alpha'-trehalose 6-mycolate = alpha,alpha'-trehalose 6,6'-bismycolate + alpha,alpha-trehalose. In terms of biological role, the antigen 85 proteins (FbpA, FbpB, FbpC) are responsible for the high affinity of mycobacteria to fibronectin, a large adhesive glycoprotein, which facilitates the attachment of M.tuberculosis to murine alveolar macrophages (AMs). They also help to maintain the integrity of the cell wall by catalyzing the transfer of mycolic acids to cell wall arabinogalactan and through the synthesis of alpha,alpha-trehalose dimycolate (TDM, cord factor). They catalyze the transfer of a mycoloyl residue from one molecule of alpha,alpha-trehalose monomycolate (TMM) to another TMM, leading to the formation of TDM. The chain is Diacylglycerol acyltransferase/mycolyltransferase Ag85C (fbpC) from Mycobacterium avium.